A 548-amino-acid chain; its full sequence is 2-succinyl-5-enolpyruvyl-6-hydroxy-3-cyclohexene-1-carboxylate synthase (548 aa).

It belongs to the TPP enzyme family. MenD subfamily. In terms of assembly, homodimer. Mg(2+) is required as a cofactor. It depends on Mn(2+) as a cofactor. The cofactor is thiamine diphosphate.

The enzyme catalyses isochorismate + 2-oxoglutarate + H(+) = 5-enolpyruvoyl-6-hydroxy-2-succinyl-cyclohex-3-ene-1-carboxylate + CO2. It functions in the pathway quinol/quinone metabolism; 1,4-dihydroxy-2-naphthoate biosynthesis; 1,4-dihydroxy-2-naphthoate from chorismate: step 2/7. It participates in quinol/quinone metabolism; menaquinone biosynthesis. Its function is as follows. Catalyzes the thiamine diphosphate-dependent decarboxylation of 2-oxoglutarate and the subsequent addition of the resulting succinic semialdehyde-thiamine pyrophosphate anion to isochorismate to yield 2-succinyl-5-enolpyruvyl-6-hydroxy-3-cyclohexene-1-carboxylate (SEPHCHC). In Mycobacterium marinum (strain ATCC BAA-535 / M), this protein is 2-succinyl-5-enolpyruvyl-6-hydroxy-3-cyclohexene-1-carboxylate synthase.